We begin with the raw amino-acid sequence, 76 residues long: Protein CsbA (76 aa).

Over 1–5 (MITKA) the chain is Extracellular. The chain crosses the membrane as a helical span at residues 6–22 (VFALFFPFMLVVLFTRV). Residues 23–27 (TFNHY) are Cytoplasmic-facing. Residues 28-44 (VAIALTAALLFASYLKG) form a helical membrane-spanning segment. At 45–49 (YTETY) the chain is on the extracellular side. Residues 50–66 (FIVGLDVVSLVAGGLYM) form a helical membrane-spanning segment. At 67 to 76 (AKKAAEKKEE) the chain is on the cytoplasmic side.

The protein resides in the cell membrane. The sequence is that of Protein CsbA (csbA) from Bacillus subtilis (strain 168).